Consider the following 101-residue polypeptide: Small ribosomal subunit protein uS14 (101 aa).

A disordered region spans residues 1–21 (MAKTSAVEKNKRRRKSVAQQA).

It belongs to the universal ribosomal protein uS14 family. As to quaternary structure, part of the 30S ribosomal subunit. Contacts proteins S3 and S10.

Its function is as follows. Binds 16S rRNA, required for the assembly of 30S particles and may also be responsible for determining the conformation of the 16S rRNA at the A site. This Agrobacterium fabrum (strain C58 / ATCC 33970) (Agrobacterium tumefaciens (strain C58)) protein is Small ribosomal subunit protein uS14.